The chain runs to 578 residues: Sulfite reductase [NADPH] hemoprotein beta-component (578 aa).

Residues Met-1 to Leu-21 are disordered. Residues Cys-443, Cys-449, Cys-488, and Cys-492 each coordinate [4Fe-4S] cluster. Cys-492 is a binding site for siroheme.

Belongs to the nitrite and sulfite reductase 4Fe-4S domain family. As to quaternary structure, alpha(8)-beta(8). The alpha component is a flavoprotein, the beta component is a hemoprotein. It depends on siroheme as a cofactor. [4Fe-4S] cluster serves as cofactor.

The enzyme catalyses hydrogen sulfide + 3 NADP(+) + 3 H2O = sulfite + 3 NADPH + 4 H(+). The protein operates within sulfur metabolism; hydrogen sulfide biosynthesis; hydrogen sulfide from sulfite (NADPH route): step 1/1. In terms of biological role, component of the sulfite reductase complex that catalyzes the 6-electron reduction of sulfite to sulfide. This is one of several activities required for the biosynthesis of L-cysteine from sulfate. The protein is Sulfite reductase [NADPH] hemoprotein beta-component of Methylocella silvestris (strain DSM 15510 / CIP 108128 / LMG 27833 / NCIMB 13906 / BL2).